Reading from the N-terminus, the 228-residue chain is AA9 family lytic polysaccharide monooxygenase A (228 aa).

Residues histidine 1 and histidine 86 each contribute to the Cu(2+) site. Histidine 1 carries the methylhistidine modification. 2 disulfide bridges follow: cysteine 56–cysteine 178 and cysteine 97–cysteine 101. A glycan (N-linked (GlcNAc...) asparagine) is linked at asparagine 138. Positions 164 and 173 each coordinate O2. Tyrosine 175 lines the Cu(2+) pocket.

It belongs to the polysaccharide monooxygenase AA9 family. Cu(2+) is required as a cofactor. The catalytically essential N-terminal histidine His-22 is post-translationally modified by methylation to prevent protonation of the histidine side chain, and protect the critical active site of the enzyme from oxidative damage.

It localises to the secreted. The catalysed reaction is [(1-&gt;4)-beta-D-glucosyl]n+m + reduced acceptor + O2 = 4-dehydro-beta-D-glucosyl-[(1-&gt;4)-beta-D-glucosyl]n-1 + [(1-&gt;4)-beta-D-glucosyl]m + acceptor + H2O.. Its activity is regulated as follows. Small amounts of H(2)O(2) boost LPMO activity, while higher amounts lead to inactivation of the enzyme. Its function is as follows. Lytic polysaccharide monooxygenase (LPMO) that depolymerizes crystalline and amorphous polysaccharides via the oxidation of scissile alpha- or beta-(1-4)-glycosidic bonds, yielding C1 and C4 oxidation product. Catalysis by LPMOs requires the reduction of the active-site copper from Cu(II) to Cu(I) by a reducing agent and H(2)O(2) or O(2) as a cosubstrate. Is able to cleave cellulose and xylan to produce C1- and C4-oxidized products. This Thermoascus aurantiacus protein is AA9 family lytic polysaccharide monooxygenase A.